Reading from the N-terminus, the 311-residue chain is Ribosomal RNA small subunit methyltransferase H (311 aa).

S-adenosyl-L-methionine contacts are provided by residues 32–34 (AGH), D52, F79, D100, and Q107.

This sequence belongs to the methyltransferase superfamily. RsmH family.

The protein resides in the cytoplasm. The enzyme catalyses cytidine(1402) in 16S rRNA + S-adenosyl-L-methionine = N(4)-methylcytidine(1402) in 16S rRNA + S-adenosyl-L-homocysteine + H(+). Specifically methylates the N4 position of cytidine in position 1402 (C1402) of 16S rRNA. The polypeptide is Ribosomal RNA small subunit methyltransferase H (Staphylococcus aureus (strain Mu3 / ATCC 700698)).